A 461-amino-acid polypeptide reads, in one-letter code: tRNA modification GTPase MnmE (461 aa).

Residues lysine 32, glutamate 89, and lysine 128 each contribute to the (6S)-5-formyl-5,6,7,8-tetrahydrofolate site. The region spanning 224–387 is the TrmE-type G domain; that stretch reads GHALSIVGKP…LSQKISEFFP (164 aa). Position 234 (asparagine 234) interacts with K(+). Residues 234–239, 253–259, and 278–281 each bind GTP; these read NAGKSS, SDIKGTT, and DTAG. Residue serine 238 coordinates Mg(2+). K(+)-binding residues include serine 253, isoleucine 255, and threonine 258. Threonine 259 provides a ligand contact to Mg(2+). Lysine 461 lines the (6S)-5-formyl-5,6,7,8-tetrahydrofolate pocket.

Belongs to the TRAFAC class TrmE-Era-EngA-EngB-Septin-like GTPase superfamily. TrmE GTPase family. As to quaternary structure, homodimer. Heterotetramer of two MnmE and two MnmG subunits. Requires K(+) as cofactor.

The protein localises to the cytoplasm. Its function is as follows. Exhibits a very high intrinsic GTPase hydrolysis rate. Involved in the addition of a carboxymethylaminomethyl (cmnm) group at the wobble position (U34) of certain tRNAs, forming tRNA-cmnm(5)s(2)U34. In Helicobacter pylori (strain J99 / ATCC 700824) (Campylobacter pylori J99), this protein is tRNA modification GTPase MnmE.